The following is a 264-amino-acid chain: Tryptophan synthase alpha chain (264 aa).

Catalysis depends on proton acceptor residues glutamate 49 and aspartate 60.

This sequence belongs to the TrpA family. Tetramer of two alpha and two beta chains.

The catalysed reaction is (1S,2R)-1-C-(indol-3-yl)glycerol 3-phosphate + L-serine = D-glyceraldehyde 3-phosphate + L-tryptophan + H2O. It functions in the pathway amino-acid biosynthesis; L-tryptophan biosynthesis; L-tryptophan from chorismate: step 5/5. Functionally, the alpha subunit is responsible for the aldol cleavage of indoleglycerol phosphate to indole and glyceraldehyde 3-phosphate. The sequence is that of Tryptophan synthase alpha chain from Geotalea daltonii (strain DSM 22248 / JCM 15807 / FRC-32) (Geobacter daltonii).